The chain runs to 374 residues: GTPase Obg (374 aa).

The region spanning 1 to 159 is the Obg domain; sequence MKFIDEVRIH…RDLRLELRLL (159 aa). Residues 160-333 enclose the OBG-type G domain; the sequence is ADVGLLGLPN…LVYAIWQALP (174 aa). Residues 166-173, 191-195, 213-216, 283-286, and 314-316 each bind GTP; these read GLPNAGKS, FTTLY, DIPG, NKSD, and SAA. 2 residues coordinate Mg(2+): S173 and T193. The segment at 337 to 374 is disordered; that stretch reads PAADPTQTEDWGDESDAGERLENWEGDDLDADWEEEQV. A compositionally biased stretch (acidic residues) spans 360 to 374; it reads WEGDDLDADWEEEQV.

The protein belongs to the TRAFAC class OBG-HflX-like GTPase superfamily. OBG GTPase family. As to quaternary structure, monomer. It depends on Mg(2+) as a cofactor.

The protein localises to the cytoplasm. Functionally, an essential GTPase which binds GTP, GDP and possibly (p)ppGpp with moderate affinity, with high nucleotide exchange rates and a fairly low GTP hydrolysis rate. Plays a role in control of the cell cycle, stress response, ribosome biogenesis and in those bacteria that undergo differentiation, in morphogenesis control. The protein is GTPase Obg of Acidithiobacillus ferrooxidans (strain ATCC 23270 / DSM 14882 / CIP 104768 / NCIMB 8455) (Ferrobacillus ferrooxidans (strain ATCC 23270)).